The sequence spans 130 residues: Sulfurtransferase TusD (130 aa).

The Cysteine persulfide intermediate role is filled by Cys-80.

This sequence belongs to the DsrE/TusD family. As to quaternary structure, heterohexamer, formed by a dimer of trimers. The hexameric TusBCD complex contains 2 copies each of TusB, TusC and TusD. The TusBCD complex interacts with TusE.

It localises to the cytoplasm. Its function is as follows. Part of a sulfur-relay system required for 2-thiolation of 5-methylaminomethyl-2-thiouridine (mnm(5)s(2)U) at tRNA wobble positions. Accepts sulfur from TusA and transfers it in turn to TusE. The polypeptide is Sulfurtransferase TusD (Proteus mirabilis (strain HI4320)).